Consider the following 167-residue polypeptide: Zymogen granule membrane protein 16 (167 aa).

Positions methionine 1–alanine 16 are cleaved as a signal peptide. A Jacalin-type lectin domain is found at serine 24–threonine 159.

The protein belongs to the jacalin lectin family. In terms of tissue distribution, expressed in pancreas, colon, duodenum, and much less in stomach.

It is found in the secreted. Its subcellular location is the extracellular space. The protein localises to the extracellular matrix. The protein resides in the zymogen granule lumen. It localises to the golgi apparatus lumen. Functionally, may play a role in protein trafficking. May act as a linker molecule between the submembranous matrix on the luminal side of zymogen granule membrane (ZGM) and aggregated secretory proteins during granule formation in the TGN. The sequence is that of Zymogen granule membrane protein 16 (Zg16) from Rattus norvegicus (Rat).